The following is a 264-amino-acid chain: Thymidylate synthase (264 aa).

R21 lines the dUMP pocket. (6R)-5,10-methylene-5,6,7,8-tetrahydrofolate is bound at residue H51. 126–127 (RR) contributes to the dUMP binding site. C146 functions as the Nucleophile in the catalytic mechanism. Residues 166-169 (RSCD), N177, and 207-209 (HLY) contribute to the dUMP site. Residue D169 participates in (6R)-5,10-methylene-5,6,7,8-tetrahydrofolate binding. A263 serves as a coordination point for (6R)-5,10-methylene-5,6,7,8-tetrahydrofolate.

It belongs to the thymidylate synthase family. Bacterial-type ThyA subfamily. Homodimer.

It is found in the cytoplasm. The enzyme catalyses dUMP + (6R)-5,10-methylene-5,6,7,8-tetrahydrofolate = 7,8-dihydrofolate + dTMP. It participates in pyrimidine metabolism; dTTP biosynthesis. In terms of biological role, catalyzes the reductive methylation of 2'-deoxyuridine-5'-monophosphate (dUMP) to 2'-deoxythymidine-5'-monophosphate (dTMP) while utilizing 5,10-methylenetetrahydrofolate (mTHF) as the methyl donor and reductant in the reaction, yielding dihydrofolate (DHF) as a by-product. This enzymatic reaction provides an intracellular de novo source of dTMP, an essential precursor for DNA biosynthesis. This chain is Thymidylate synthase, found in Yersinia pseudotuberculosis serotype O:1b (strain IP 31758).